Consider the following 298-residue polypeptide: MTKQTEYKRKPEWLKIKLNTNENYTGLKKMMRSKNLHTVCEEAKCPNIHECWAVRKTATFMILGAVCTRACRFCAVKTGLPTELDLQEPERVADSVVQMGLKHVVITAVARDDLKDGGAAVFAETVRAVRRKNPFTSIEVLPSDMAGVEENLKMLMDAKPDILNHNIETVRRLSNRVRARAKYDRSLEFLRRAKEMQPDIPTKSSIMVGLGETREDLIEAMDDLRANNVDILTLGQYLQPSKKHLPVIKYYPPAEFAELKEIALSKGFSHCEAGPLVRSSYHADEQVRSAKEKTAEAK.

Positions 40, 45, 51, 67, 71, 74, and 280 each coordinate [4Fe-4S] cluster. The Radical SAM core domain maps to 53–269; it reads AVRKTATFMI…KEIALSKGFS (217 aa).

It belongs to the radical SAM superfamily. Lipoyl synthase family. It depends on [4Fe-4S] cluster as a cofactor.

It is found in the cytoplasm. It carries out the reaction [[Fe-S] cluster scaffold protein carrying a second [4Fe-4S](2+) cluster] + N(6)-octanoyl-L-lysyl-[protein] + 2 oxidized [2Fe-2S]-[ferredoxin] + 2 S-adenosyl-L-methionine + 4 H(+) = [[Fe-S] cluster scaffold protein] + N(6)-[(R)-dihydrolipoyl]-L-lysyl-[protein] + 4 Fe(3+) + 2 hydrogen sulfide + 2 5'-deoxyadenosine + 2 L-methionine + 2 reduced [2Fe-2S]-[ferredoxin]. It functions in the pathway protein modification; protein lipoylation via endogenous pathway; protein N(6)-(lipoyl)lysine from octanoyl-[acyl-carrier-protein]. Catalyzes the radical-mediated insertion of two sulfur atoms into the C-6 and C-8 positions of the octanoyl moiety bound to the lipoyl domains of lipoate-dependent enzymes, thereby converting the octanoylated domains into lipoylated derivatives. The polypeptide is Lipoyl synthase (Bacillus cereus (strain G9842)).